The following is a 247-amino-acid chain: Eukaryotic translation initiation factor 6 (247 aa).

A phosphoserine; by CK1 mark is found at Ser-174 and Ser-175.

This sequence belongs to the eIF-6 family. In terms of assembly, monomer. Associates with the 60S ribosomal subunit. Phosphorylation at Ser-174 and Ser-175 promotes nuclear export.

It localises to the cytoplasm. It is found in the nucleus. The protein resides in the nucleolus. Binds to the 60S ribosomal subunit and prevents its association with the 40S ribosomal subunit to form the 80S initiation complex in the cytoplasm. Is also involved in ribosome biogenesis. Associates with pre-60S subunits in the nucleus and is involved in its nuclear export. The sequence is that of Eukaryotic translation initiation factor 6 (tif6) from Aspergillus oryzae (strain ATCC 42149 / RIB 40) (Yellow koji mold).